A 304-amino-acid chain; its full sequence is D-tagatose-1-phosphate kinase (304 aa).

The active-site Proton acceptor is the D250.

The protein belongs to the carbohydrate kinase PfkB family. Mg(2+) serves as cofactor.

It catalyses the reaction alpha-D-tagatopyranose 1-phosphate + ATP = D-tagatofuranose 1,6-bisphosphate + ADP + H(+). It functions in the pathway carbohydrate degradation. With respect to regulation, activity is inhibited by tagatose-6-phosphate and fructose-6-phosphate. Kinase involved in a D-tagatose catabolic pathway. Catalyzes the phosphorylation of D-tagatose-1-phosphate (Tag-1P) to D-tagatose-1,6-bisphosphate. Can also use D-fructose-1-phosphate, with 40-fold lower catalytic efficiency, but not tagatose-6-phosphate or fructose-6-phosphate. The substrate, which occurs in a pyranose form in solution, may undergo a change to the furanose conformation after binding to the enzyme, in order to permit phosphorylation at C-6. In Bacillus licheniformis (strain ATCC 14580 / DSM 13 / JCM 2505 / CCUG 7422 / NBRC 12200 / NCIMB 9375 / NCTC 10341 / NRRL NRS-1264 / Gibson 46), this protein is D-tagatose-1-phosphate kinase.